The chain runs to 198 residues: Molybdenum cofactor guanylyltransferase (198 aa).

GTP-binding positions include 14–16 (LAG), K27, D73, and D103. D103 contacts Mg(2+).

It belongs to the MobA family. Monomer. The cofactor is Mg(2+).

The protein resides in the cytoplasm. The catalysed reaction is Mo-molybdopterin + GTP + H(+) = Mo-molybdopterin guanine dinucleotide + diphosphate. Its function is as follows. Transfers a GMP moiety from GTP to Mo-molybdopterin (Mo-MPT) cofactor (Moco or molybdenum cofactor) to form Mo-molybdopterin guanine dinucleotide (Mo-MGD) cofactor. This is Molybdenum cofactor guanylyltransferase from Pseudomonas aeruginosa (strain ATCC 15692 / DSM 22644 / CIP 104116 / JCM 14847 / LMG 12228 / 1C / PRS 101 / PAO1).